Here is a 45-residue protein sequence, read N- to C-terminus: Large ribosomal subunit protein bL34 (45 aa).

This sequence belongs to the bacterial ribosomal protein bL34 family.

The polypeptide is Large ribosomal subunit protein bL34 (Kocuria rhizophila (strain ATCC 9341 / DSM 348 / NBRC 103217 / DC2201)).